Here is a 3412-residue protein sequence, read N- to C-terminus: Genome polyprotein (3412 aa).

The Cytoplasmic segment spans residues 1–104 (MSGRKAQGKT…LSSRKRRSNE (104 aa)). Positions 38–72 (PGPSRGVQGFIFFFLFNILTGKKLTTHLKRLWRML) are hydrophobic; homodimerization of capsid protein C. Residues 102–121 (SNEMAMMPLLILSMVILAGG) constitute a propeptide, ER anchor for the capsid protein C, removed in mature form by serine protease NS3. The helical transmembrane segment at 105-125 (MAMMPLLILSMVILAGGVTLV) threads the bilayer. Over 126–244 (RKNRWLLLNV…GERQLQKIER (119 aa)) the chain is Extracellular. 2 N-linked (GlcNAc...) asparagine; by host glycosylation sites follow: N134 and N150. A helical membrane pass occupies residues 245 to 265 (WLVRNPFFAITALAIAYLVGN). The Cytoplasmic portion of the chain corresponds to 266 to 270 (NMTQR). A helical transmembrane segment spans residues 271-285 (VVIALLVLAVGPAYS). Topologically, residues 286-730 (AHCIGITDRD…TVFGSAFQGL (445 aa)) are extracellular. 8 disulfide bridges follow: C288/C315, C345/C401, C345/C406, C359/C390, C377/C401, C377/C406, C467/C568, and C585/C615. The tract at residues 383-396 (DRGWGNGCGLFGKG) is fusion peptide. A helical transmembrane segment spans residues 731–751 (FGGLSWITKVIMGAVLIWVGI). Topologically, residues 752–757 (NTRNMT) are extracellular. A helical transmembrane segment spans residues 758–778 (MSMSMILVGVIMMFLSLGVGA). Residues 779–1132 (DQGCAVNFGK…LVRSWVTAGE (354 aa)) lie on the Extracellular side of the membrane. 6 disulfide bridges follow: C782–C793, C833–C921, C957–C1002, C1058–C1107, C1069–C1091, and C1090–C1094. Residues N908 and N986 are each glycosylated (N-linked (GlcNAc...) asparagine; by host). Residues 1133–1153 (VHAVPFGLVSMMIAMEVVLRK) traverse the membrane as a helical segment. Over 1154-1201 (RQGPKQMLVGGIILLGAMLVGQVTVLDLVKLIVAVGLHFHEINNGGDA) the chain is Cytoplasmic. Residues 1202-1222 (MYMALIASFSIRPGLLVGFGL) form a helical membrane-spanning segment. The Lumenal segment spans residues 1223-1287 (RTLWSPRERL…VLPLMALLTP (65 aa)). The helical transmembrane segment at 1288–1308 (VTMHEVRMATMLFCTVVIVGV) threads the bilayer. Residues 1309 to 1355 (LHQNAKDTSMQKTIPIVALTLTSYMGLTQPFLGLCAYMSTQVFGRRS) lie on the Cytoplasmic side of the membrane. Residues 1356-1376 (IPVNEALAAAGLVGVLAGLAF) traverse the membrane as a helical segment. Over 1377–1378 (QD) the chain is Lumenal. Residues 1379-1399 (MENFLGPIAVGGILMMLVSVA) traverse the membrane as a helical segment. Residues 1400 to 1456 (GKVDGLELKKLGEVSWEEEAEISGSSSRYDVALSEQGEFKLLSEDKVPWDQIVMTSL) are Cytoplasmic-facing. The interval 1407–1446 (LKKLGEVSWEEEAEISGSSSRYDVALSEQGEFKLLSEDKV) is interacts with and activates NS3 protease. The segment at residues 1457-1477 (ALVGAAIHPFALLLVLGGWVL) is an intramembrane region (helical). At 1478-2157 (HIKGARRSGD…RNALSMMPEA (680 aa)) the chain is on the cytoplasmic side. The 181-residue stretch at 1485–1665 (SGDVLWDIPT…EVKEESKEEL (181 aa)) folds into the Peptidase S7 domain. Active-site charge relay system; for serine protease NS3 activity residues include H1537, D1561, and S1622. Residues 1669 to 1825 (PTMLKKGMTT…HSNGEIEDVQ (157 aa)) form the Helicase ATP-binding domain. Residues 1673–1676 (KKGM) are important for RNA-binding. 1682–1689 (FHPGAGKT) contacts ATP. The DEAH box signature appears at 1773-1776 (DEAH). The Helicase C-terminal domain occupies 1820–1997 (EIEDVQTDIP…VRGGMVAPLY (178 aa)). The residue at position 1877 (K1877) is an N6-acetyllysine; by host. The disordered stretch occupies residues 1942–1961 (AAQRRGRIGRNPNRDGDSYY). A helical transmembrane segment spans residues 2158-2178 (MTIVMLFILAGLLTSGMVIFF). Residues 2179–2186 (MSPKGMSR) lie on the Lumenal side of the membrane. Positions 2187–2207 (MSMAMGTMAGSGYLMFLGGVK) form an intramembrane region, helical. Over 2208–2209 (PT) the chain is Lumenal. Residues 2210-2230 (HISYVMLIFFVLMVVIIPEPG) traverse the membrane as a helical segment. The Cytoplasmic segment spans residues 2231 to 2241 (QQRTIQDNQVA). A helical membrane pass occupies residues 2242–2262 (YLIIGILTLLSIVAANELGML). The Lumenal segment spans residues 2263–2293 (EKTKEDFFGRRNIATSGGTIPWSWPDLDLKP). An intramembrane region (helical) is located at residues 2294-2314 (GAAWTVYVGIVTMLSPMLHHW). At 2315–2360 (IKVEYGNLSLSGIAQSASVLSFMDKGIPFMKMNISVVILLVSGWNS) the chain is on the lumenal side. Residues 2361–2380 (ITVIPLLCGVGGAMLHWTLI) traverse the membrane as a helical segment. Topologically, residues 2381-2421 (LPGIKAQQSKLAQKRVFHGVAKNPVVDGNPTADIEEAPEMP) are cytoplasmic. The chain crosses the membrane as a helical span at residues 2422-2442 (ALYEKKLALYLLLALSLMSVA). At 2443 to 2445 (MCR) the chain is on the lumenal side. A helical transmembrane segment spans residues 2446–2466 (TPFSLAEGIVLSSAALGPLIE). Over 2467-3411 (GNTSLLWNGP…VDADLQPGEL (945 aa)) the chain is Cytoplasmic. In terms of domain architecture, mRNA cap 0-1 NS5-type MT spans 2508 to 2772 (GSASGKTLGE…DVILPIGTRS (265 aa)). S2563 is a binding site for S-adenosyl-L-methionine. S2563 is modified (phosphoserine). K2568 serves as the catalytic For 2'-O-MTase activity. 6 residues coordinate S-adenosyl-L-methionine: G2593, W2594, T2611, L2612, D2638, and I2639. The For 2'-O-MTase activity role is filled by D2653. Residue I2654 coordinates S-adenosyl-L-methionine. Residues K2689 and E2725 each act as for 2'-O-MTase activity in the active site. An S-adenosyl-L-methionine-binding site is contributed by Y2727. Positions 2879-2912 (RKIMKVVNRWLFRHLAREKNPRLCTKEEFIAKVR) match the Nuclear localization signal motif. Zn(2+)-binding residues include E2946, H2950, C2955, and C2958. In terms of domain architecture, RdRp catalytic spans 3036-3188 (GGFYADDTAG…RPVDDRFGLA (153 aa)). Zn(2+)-binding residues include H3223, C3239, and C3358.

The protein in the N-terminal section; belongs to the class I-like SAM-binding methyltransferase superfamily. mRNA cap 0-1 NS5-type methyltransferase family. Homodimer. Interacts (via N-terminus) with host EXOC1 (via C-terminus); this interaction results in EXOC1 degradation through the proteasome degradation pathway. In terms of assembly, forms heterodimers with envelope protein E in the endoplasmic reticulum and Golgi. As to quaternary structure, homodimer; in the endoplasmic reticulum and Golgi. Interacts with protein prM. Interacts with non-structural protein 1. Homodimer; Homohexamer when secreted. Interacts with envelope protein E. In terms of assembly, interacts (via N-terminus) with serine protease NS3. As to quaternary structure, forms a heterodimer with serine protease NS3. May form homooligomers. Forms a heterodimer with NS2B. Interacts with non-structural protein 2A (via N-terminus). Interacts with NS4B. Interacts with unphosphorylated RNA-directed RNA polymerase NS5; this interaction stimulates RNA-directed RNA polymerase NS5 guanylyltransferase activity. NS3 interacts with host PDCD6IP; this interaction contributes to virion release. In terms of assembly, interacts with serine protease NS3. As to quaternary structure, homodimer. Interacts with host STAT2; this interaction prevents the establishment of cellular antiviral state. Interacts with serine protease NS3. Interacts with host TRIM23; this interaction leads to NS5 ubiquitination. Specific enzymatic cleavages in vivo yield mature proteins. The nascent capsid protein C contains a C-terminal hydrophobic domain that act as a signal sequence for translocation of prM into the lumen of the ER. Mature capsid protein C is cleaved at a site upstream of this hydrophobic domain by NS3. prM is cleaved in post-Golgi vesicles by a host furin, releasing the mature small envelope protein M, and peptide pr. Non-structural protein 2A-alpha, a C-terminally truncated form of non-structural protein 2A, results from partial cleavage by NS3. Specific enzymatic cleavages in vivo yield mature proteins peptide 2K acts as a signal sequence and is removed from the N-terminus of NS4B by the host signal peptidase in the ER lumen. Signal cleavage at the 2K-4B site requires a prior NS3 protease-mediated cleavage at the 4A-2K site. In terms of processing, cleaved in post-Golgi vesicles by a host furin, releasing the mature small envelope protein M, and peptide pr. This cleavage is incomplete as up to 30% of viral particles still carry uncleaved prM. Post-translationally, N-glycosylated. N-glycosylated. The excreted form is glycosylated and this is required for efficient secretion of the protein from infected cells. In terms of processing, polyubiquitinated; ubiquitination is probably mediated by host TRIM23 and is prerequisite for NS5-STAT2 interaction. NS5 is not ISGylated or sumoylated. Post-translationally, acetylated by host KAT5. Acetylation modulates NS3 RNA-binding and unwinding activities and plays an important positive role for viral replication. Phosphorylated on serines residues. This phosphorylation may trigger NS5 nuclear localization.

The protein resides in the virion. The protein localises to the host nucleus. Its subcellular location is the host cytoplasm. It is found in the host perinuclear region. It localises to the secreted. The protein resides in the virion membrane. The protein localises to the host endoplasmic reticulum membrane. It carries out the reaction Selective hydrolysis of -Xaa-Xaa-|-Yaa- bonds in which each of the Xaa can be either Arg or Lys and Yaa can be either Ser or Ala.. The enzyme catalyses RNA(n) + a ribonucleoside 5'-triphosphate = RNA(n+1) + diphosphate. It catalyses the reaction a ribonucleoside 5'-triphosphate + H2O = a ribonucleoside 5'-diphosphate + phosphate + H(+). The catalysed reaction is ATP + H2O = ADP + phosphate + H(+). It carries out the reaction a 5'-end (5'-triphosphoguanosine)-ribonucleoside in mRNA + S-adenosyl-L-methionine = a 5'-end (N(7)-methyl 5'-triphosphoguanosine)-ribonucleoside in mRNA + S-adenosyl-L-homocysteine. The enzyme catalyses a 5'-end (N(7)-methyl 5'-triphosphoguanosine)-ribonucleoside in mRNA + S-adenosyl-L-methionine = a 5'-end (N(7)-methyl 5'-triphosphoguanosine)-(2'-O-methyl-ribonucleoside) in mRNA + S-adenosyl-L-homocysteine + H(+). Its function is as follows. Plays a role in virus budding by binding to the cell membrane and gathering the viral RNA into a nucleocapsid that forms the core of a mature virus particle. During virus entry, may induce genome penetration into the host cytoplasm after hemifusion induced by the surface proteins. Can migrate to the cell nucleus where it modulates host functions. Functionally, inhibits RNA silencing by interfering with host Dicer. In terms of biological role, prevents premature fusion activity of envelope proteins in trans-Golgi by binding to envelope protein E at pH6.0. After virion release in extracellular space, gets dissociated from E dimers. Acts as a chaperone for envelope protein E during intracellular virion assembly by masking and inactivating envelope protein E fusion peptide. prM is the only viral peptide matured by host furin in the trans-Golgi network probably to avoid catastrophic activation of the viral fusion activity in acidic Golgi compartment prior to virion release. prM-E cleavage is inefficient, and many virions are only partially matured. These uncleaved prM would play a role in immune evasion. Its function is as follows. May play a role in virus budding. Exerts cytotoxic effects by activating a mitochondrial apoptotic pathway through M ectodomain. May display a viroporin activity. Functionally, binds to host cell surface receptor and mediates fusion between viral and cellular membranes. Envelope protein is synthesized in the endoplasmic reticulum in the form of heterodimer with protein prM. They play a role in virion budding in the ER, and the newly formed immature particle is covered with 60 spikes composed of heterodimer between precursor prM and envelope protein E. The virion is transported to the Golgi apparatus where the low pH causes dissociation of PrM-E heterodimers and formation of E homodimers. prM-E cleavage is inefficient, and many virions are only partially matured. These uncleaved prM would play a role in immune evasion. In terms of biological role, involved in immune evasion, pathogenesis and viral replication. Once cleaved off the polyprotein, is targeted to three destinations: the viral replication cycle, the plasma membrane and the extracellular compartment. Essential for viral replication. Required for formation of the replication complex and recruitment of other non-structural proteins to the ER-derived membrane structures. Excreted as a hexameric lipoparticle that plays a role against host immune response. Antagonizing the complement function. Binds to the host macrophages and dendritic cells. Inhibits signal transduction originating from Toll-like receptor 3 (TLR3). Component of the viral RNA replication complex that functions in virion assembly and antagonizes the host immune response. Its function is as follows. Required cofactor for the serine protease function of NS3. May have membrane-destabilizing activity and form viroporins. Functionally, displays three enzymatic activities: serine protease, NTPase and RNA helicase. NS3 serine protease, in association with NS2B, performs its autocleavage and cleaves the polyprotein at dibasic sites in the cytoplasm: C-prM, NS2A-NS2B, NS2B-NS3, NS3-NS4A, NS4A-2K and NS4B-NS5. NS3 RNA helicase binds RNA and unwinds dsRNA in the 3' to 5' direction. Also plays a role in virus assembly. In terms of biological role, regulates the ATPase activity of the NS3 helicase activity. NS4A allows NS3 helicase to conserve energy during unwinding. Functions as a signal peptide for NS4B and is required for the interferon antagonism activity of the latter. Its function is as follows. Induces the formation of ER-derived membrane vesicles where the viral replication takes place. Inhibits interferon (IFN)-induced host STAT1 phosphorylation and nuclear translocation, thereby preventing the establishment of cellular antiviral state by blocking the IFN-alpha/beta pathway. Functionally, replicates the viral (+) and (-) RNA genome, and performs the capping of genomes in the cytoplasm. NS5 methylates viral RNA cap at guanine N-7 and ribose 2'-O positions. Besides its role in RNA genome replication, also prevents the establishment of cellular antiviral state by blocking the interferon-alpha/beta (IFN-alpha/beta) signaling pathway. IFN-I induces binding of NS5 to host IFN-activated transcription factor STAT2, preventing its transcriptional activity. Host TRIM23 is the E3 ligase that interacts with and polyubiquitinates NS5 to promote its binding to STAT2 and trigger IFN-I signaling inhibition. This is Genome polyprotein from Yellow fever virus (isolate Ethiopia/Couma/1961) (YFV).